Reading from the N-terminus, the 239-residue chain is 1-(5-phosphoribosyl)-5-[(5-phosphoribosylamino)methylideneamino] imidazole-4-carboxamide isomerase (239 aa).

The Proton acceptor role is filled by D8. D129 serves as the catalytic Proton donor.

It belongs to the HisA/HisF family.

Its subcellular location is the cytoplasm. It carries out the reaction 1-(5-phospho-beta-D-ribosyl)-5-[(5-phospho-beta-D-ribosylamino)methylideneamino]imidazole-4-carboxamide = 5-[(5-phospho-1-deoxy-D-ribulos-1-ylimino)methylamino]-1-(5-phospho-beta-D-ribosyl)imidazole-4-carboxamide. It participates in amino-acid biosynthesis; L-histidine biosynthesis; L-histidine from 5-phospho-alpha-D-ribose 1-diphosphate: step 4/9. This is 1-(5-phosphoribosyl)-5-[(5-phosphoribosylamino)methylideneamino] imidazole-4-carboxamide isomerase from Bacillus thuringiensis (strain Al Hakam).